The chain runs to 133 residues: MQRVTITLDDDLLETLDSLSQRRGYNNRSEAIRDILRGALAQETAQQHGTQGFAVLSYVYEHEKRDLARRLVSTQHHHHDLSVATLHVHVSHEDCLEIAVLKGDMGDIQHFADDVIAQRGVRHGHLQCLPDDE.

Ni(2+)-binding residues include His-76, His-87, His-89, and Cys-95.

This sequence belongs to the transcriptional regulatory CopG/NikR family. In terms of assembly, homotetramer. Requires Ni(2+) as cofactor.

Its function is as follows. Transcriptional repressor of the nikABCDE operon. Is active in the presence of excessive concentrations of intracellular nickel. The protein is Nickel-responsive regulator of Enterobacter sp. (strain 638).